We begin with the raw amino-acid sequence, 331 residues long: Glyceraldehyde-3-phosphate dehydrogenase (331 aa).

NAD(+) is bound by residues 12–13 (RI), aspartate 34, arginine 78, and threonine 120. D-glyceraldehyde 3-phosphate contacts are provided by residues 149 to 151 (SCT), threonine 180, 209 to 210 (TG), and arginine 232. Residue cysteine 150 is the Nucleophile of the active site. Residue asparagine 314 coordinates NAD(+).

This sequence belongs to the glyceraldehyde-3-phosphate dehydrogenase family. Homotetramer.

Its subcellular location is the cytoplasm. It carries out the reaction D-glyceraldehyde 3-phosphate + phosphate + NAD(+) = (2R)-3-phospho-glyceroyl phosphate + NADH + H(+). It functions in the pathway carbohydrate degradation; glycolysis; pyruvate from D-glyceraldehyde 3-phosphate: step 1/5. Functionally, catalyzes the oxidative phosphorylation of glyceraldehyde 3-phosphate (G3P) to 1,3-bisphosphoglycerate (BPG) using the cofactor NAD. The first reaction step involves the formation of a hemiacetal intermediate between G3P and a cysteine residue, and this hemiacetal intermediate is then oxidized to a thioester, with concomitant reduction of NAD to NADH. The reduced NADH is then exchanged with the second NAD, and the thioester is attacked by a nucleophilic inorganic phosphate to produce BPG. The chain is Glyceraldehyde-3-phosphate dehydrogenase (gapA) from Salmonella typhi.